Here is a 250-residue protein sequence, read N- to C-terminus: 23S rRNA (guanosine-2'-O-)-methyltransferase RlmB (250 aa).

Residues glycine 197, isoleucine 217, and methionine 226 each coordinate S-adenosyl-L-methionine.

It belongs to the class IV-like SAM-binding methyltransferase superfamily. RNA methyltransferase TrmH family. RlmB subfamily.

It is found in the cytoplasm. It carries out the reaction guanosine(2251) in 23S rRNA + S-adenosyl-L-methionine = 2'-O-methylguanosine(2251) in 23S rRNA + S-adenosyl-L-homocysteine + H(+). In terms of biological role, specifically methylates the ribose of guanosine 2251 in 23S rRNA. The chain is 23S rRNA (guanosine-2'-O-)-methyltransferase RlmB from Neisseria meningitidis serogroup B (strain ATCC BAA-335 / MC58).